The chain runs to 288 residues: Diaminopimelate epimerase (288 aa).

Substrate-binding residues include N13, Q46, and N66. The Proton donor role is filled by C75. Substrate contacts are provided by residues 76–77 (GN), N166, N199, and 217–218 (ER). C226 serves as the catalytic Proton acceptor. 227-228 (GT) lines the substrate pocket.

This sequence belongs to the diaminopimelate epimerase family. In terms of assembly, homodimer.

Its subcellular location is the cytoplasm. The enzyme catalyses (2S,6S)-2,6-diaminopimelate = meso-2,6-diaminopimelate. It functions in the pathway amino-acid biosynthesis; L-lysine biosynthesis via DAP pathway; DL-2,6-diaminopimelate from LL-2,6-diaminopimelate: step 1/1. Its function is as follows. Catalyzes the stereoinversion of LL-2,6-diaminopimelate (L,L-DAP) to meso-diaminopimelate (meso-DAP), a precursor of L-lysine and an essential component of the bacterial peptidoglycan. The protein is Diaminopimelate epimerase of Cupriavidus metallidurans (strain ATCC 43123 / DSM 2839 / NBRC 102507 / CH34) (Ralstonia metallidurans).